The following is a 515-amino-acid chain: Bifunctional purine biosynthesis protein PurH (515 aa).

An MGS-like domain is found at Met-1–Val-145.

The protein belongs to the PurH family.

The catalysed reaction is (6R)-10-formyltetrahydrofolate + 5-amino-1-(5-phospho-beta-D-ribosyl)imidazole-4-carboxamide = 5-formamido-1-(5-phospho-D-ribosyl)imidazole-4-carboxamide + (6S)-5,6,7,8-tetrahydrofolate. It carries out the reaction IMP + H2O = 5-formamido-1-(5-phospho-D-ribosyl)imidazole-4-carboxamide. The protein operates within purine metabolism; IMP biosynthesis via de novo pathway; 5-formamido-1-(5-phospho-D-ribosyl)imidazole-4-carboxamide from 5-amino-1-(5-phospho-D-ribosyl)imidazole-4-carboxamide (10-formyl THF route): step 1/1. It participates in purine metabolism; IMP biosynthesis via de novo pathway; IMP from 5-formamido-1-(5-phospho-D-ribosyl)imidazole-4-carboxamide: step 1/1. The sequence is that of Bifunctional purine biosynthesis protein PurH from Streptococcus suis.